The primary structure comprises 931 residues: MRVKDTLNLGRTKFPMRGKLPVTEAQREQLWEENKVYELRQKLNEGKPTFVLHDGPPYANGNIHIGHAMNKISKDFIVRYKSMSGYRAPYVPGWDTHGLPIEHQLTKSGYDRKKMSLTEFRDLCREYALKQVDKQRTDFKRLGVSGEWDHPYLTLDKEFEAAQIRVFGEFAKKGLLYQAKKPVYWSWSSESALAEAEVEYHDVVAKTAFFVEQIKDGKGRLDNDTYLVVWTTTPWTVPASEAVAVNPKFDYSVVNPANDDRKFVVATDLLEKLAEKLGWEDYEVVDHLMGQELEGMTTQHPYLDRDLLVGLADYVTADAGTGLVHTAPGYGDDDYNFGKKYDLPIFAPINDQGVLTKENGEGFEGVFYQDADDVSLQKLEENNALLLQEPLQHSYPFDWRTKQPIIFRATDQWFVSIEKMRQNILDALEDVKYHPEWGKVRLRNMIKDRGDWVISRQRVWGVPLPIFYAEDGTPIMEEETINHVAELFAKYGSNVWFEREAKDLLPEGYTNEHSPNGKFTKETDIMDVWFDSGSSHQGVLAERDYLTYPADLYLEGSDQYRGWFNSSLITSVVCSGHAPYKEIVSQGFTLDKRGNKMSKSQGNVIDPNKVVQQMGAEIIRLWVMSADTSADVRVSMGTFQQISEAYRKLRNTFRFLLANTSDFNPEENTVSYEKLQSVDKYMLVKLNHFLKTMREDFDNYDFLDAYKVLINFVNNDLSAFYMNIAKDVLYIEAENSEVRRSMQTVFYDILLTLVKLLTPILPHTTEEVWSYMNEPEDFVQLTEIPDPRTFAGEEELLSKWDDFMEVRSHVLKSLEEARNAKLIGKSLEAQVDLYLTDDQKQLLDSLNENIQLLLGVSALHVHPADEAPADADQYNDGVAVKVTTANGETCARCRMVKEDVGSDPAYPELCARCAAIVRENFPETAEDGLEE.

Residues 57–67 (PYANGNIHIGH) carry the 'HIGH' region motif. Glu-555 contributes to the L-isoleucyl-5'-AMP binding site. The short motif at 596 to 600 (KMSKS) is the 'KMSKS' region element. Position 599 (Lys-599) interacts with ATP. Residues Cys-890, Cys-893, Cys-910, and Cys-913 each coordinate Zn(2+).

It belongs to the class-I aminoacyl-tRNA synthetase family. IleS type 1 subfamily. As to quaternary structure, monomer. Zn(2+) is required as a cofactor.

The protein localises to the cytoplasm. It catalyses the reaction tRNA(Ile) + L-isoleucine + ATP = L-isoleucyl-tRNA(Ile) + AMP + diphosphate. Functionally, catalyzes the attachment of isoleucine to tRNA(Ile). As IleRS can inadvertently accommodate and process structurally similar amino acids such as valine, to avoid such errors it has two additional distinct tRNA(Ile)-dependent editing activities. One activity is designated as 'pretransfer' editing and involves the hydrolysis of activated Val-AMP. The other activity is designated 'posttransfer' editing and involves deacylation of mischarged Val-tRNA(Ile). This chain is Isoleucine--tRNA ligase, found in Limosilactobacillus reuteri subsp. reuteri (strain JCM 1112) (Lactobacillus reuteri).